Here is a 194-residue protein sequence, read N- to C-terminus: CASP-like protein Ni6 (194 aa).

The Cytoplasmic segment spans residues methionine 1 to arginine 27. A helical membrane pass occupies residues valine 28 to methionine 48. Residues valine 49–alanine 75 are Extracellular-facing. A helical transmembrane segment spans residues phenylalanine 76–valine 96. Residues serine 97–lysine 109 are Cytoplasmic-facing. The helical transmembrane segment at leucine 110 to glycine 130 threads the bilayer. Residues threonine 131 to histidine 161 are Extracellular-facing. A helical membrane pass occupies residues valine 162 to valine 182. Over asparagine 183–tyrosine 194 the chain is Cytoplasmic.

This sequence belongs to the Casparian strip membrane proteins (CASP) family. As to quaternary structure, homodimer and heterodimers.

It is found in the cell membrane. In Beta vulgaris subsp. maritima (Sea beet), this protein is CASP-like protein Ni6 (Ni6).